Consider the following 172-residue polypeptide: Ribosome maturation factor RimM (172 aa).

The region spanning D96 to L168 is the PRC barrel domain.

This sequence belongs to the RimM family. In terms of assembly, binds ribosomal protein uS19.

It localises to the cytoplasm. An accessory protein needed during the final step in the assembly of 30S ribosomal subunit, possibly for assembly of the head region. Essential for efficient processing of 16S rRNA. May be needed both before and after RbfA during the maturation of 16S rRNA. It has affinity for free ribosomal 30S subunits but not for 70S ribosomes. In Streptococcus suis (strain 05ZYH33), this protein is Ribosome maturation factor RimM.